Here is a 91-residue protein sequence, read N- to C-terminus: Heat shock protein 30E (91 aa).

Positions 62-91 (RDQIRQPGAPESEGTSPNTGKDGKDPGNSL) are disordered. Residues 82-91 (KDGKDPGNSL) show a composition bias toward basic and acidic residues.

Belongs to the small heat shock protein (HSP20) family.

The polypeptide is Heat shock protein 30E (hsp30e) (Xenopus laevis (African clawed frog)).